We begin with the raw amino-acid sequence, 89 residues long: uncharacterized protein (89 aa).

Residues 66–89 (RIKEQSSSSSATRTTQEPSLHLPD) form a disordered region.

This is an uncharacterized protein from Cestrum parqui (CmYLCV).